An 87-amino-acid chain; its full sequence is Large ribosomal subunit protein bL27 (87 aa).

Residues 1–20 (MAHKKAGGSSRNGRDSESKR) are disordered.

The protein belongs to the bacterial ribosomal protein bL27 family.

This is Large ribosomal subunit protein bL27 from Thiobacillus denitrificans (strain ATCC 25259 / T1).